A 266-amino-acid polypeptide reads, in one-letter code: Translation initiation factor 2 subunit alpha (266 aa).

The 72-residue stretch at 12 to 83 folds into the S1 motif domain; that stretch reads GDIVIGTVKD…RKGHIDLSLK (72 aa).

This sequence belongs to the eIF-2-alpha family. Heterotrimer composed of an alpha, a beta and a gamma chain.

Its function is as follows. eIF-2 functions in the early steps of protein synthesis by forming a ternary complex with GTP and initiator tRNA. The sequence is that of Translation initiation factor 2 subunit alpha (eif2a) from Methanocaldococcus jannaschii (strain ATCC 43067 / DSM 2661 / JAL-1 / JCM 10045 / NBRC 100440) (Methanococcus jannaschii).